We begin with the raw amino-acid sequence, 776 residues long: Serine/threonine-protein kinase-like protein CCR2 (776 aa).

The first 22 residues, 1 to 22 (MQPNSHIFVIITISSLIITVSA), serve as a signal peptide directing secretion. The Extracellular portion of the chain corresponds to 23–432 (YGSTGTIAAA…QKEQREVRRL (410 aa)). Residues N59, N92, N154, N162, N205, N278, N287, and N350 are each glycosylated (N-linked (GlcNAc...) asparagine). The TNFR-Cys repeat unit spans residues 341–396 (NCGDGWFAFNASILKESELTSLCSFHNLNICLRCGISCLEGYFPSSTCNPNADRVC). Intrachain disulfides connect C342–C371, C374–C388, and C378–C396. An N-linked (GlcNAc...) asparagine glycan is attached at N404. Residues 433-453 (VIIIGCSVLGFLVMLIGLSFI) form a helical membrane-spanning segment. At 454–776 (PKMTKGSKRD…DLIVKSGLTF (323 aa)) the chain is on the cytoplasmic side. A Protein kinase domain is found at 519 to 776 (FKEFNELGRG…DLIVKSGLTF (258 aa)). Residues 525–533 (LGRGSFGFV) and K547 each bind ATP. Residue D644 is the Proton acceptor of the active site.

The protein belongs to the protein kinase superfamily. Ser/Thr protein kinase family. In terms of assembly, homodimer. In terms of tissue distribution, expressed in roots, leaves, shoot apical meristems (SAM), and floral buds.

It localises to the membrane. The enzyme catalyses L-seryl-[protein] + ATP = O-phospho-L-seryl-[protein] + ADP + H(+). The catalysed reaction is L-threonyl-[protein] + ATP = O-phospho-L-threonyl-[protein] + ADP + H(+). In terms of biological role, serine/threonine-protein kinase with low activity. In Arabidopsis thaliana (Mouse-ear cress), this protein is Serine/threonine-protein kinase-like protein CCR2 (CCR2).